The following is a 180-amino-acid chain: Cytochrome b6-f complex subunit 4 (180 aa).

The next 3 helical transmembrane spans lie at 36–56 (LSYI…GLAV), 95–115 (LLGV…PFLE), and 131–151 (TVSL…ALPI).

The protein belongs to the cytochrome b family. PetD subfamily. In terms of assembly, the 4 large subunits of the cytochrome b6-f complex are cytochrome b6, subunit IV (17 kDa polypeptide, petD), cytochrome f and the Rieske protein, while the 4 small subunits are petG, petL, petM and petN. The complex functions as a dimer.

It localises to the plastid. It is found in the chloroplast thylakoid membrane. In terms of biological role, component of the cytochrome b6-f complex, which mediates electron transfer between photosystem II (PSII) and photosystem I (PSI), cyclic electron flow around PSI, and state transitions. This is Cytochrome b6-f complex subunit 4 from Pinus thunbergii (Japanese black pine).